Consider the following 407-residue polypeptide: Transcriptional regulator ICP22 homolog (407 aa).

The disordered stretch occupies residues 34-268; it reads RKRRRKLKPQ…STQPGGVPKL (235 aa). Positions 81-241 are enriched in acidic residues; that stretch reads EREGEGGEEG…EEAEEEEEEA (161 aa).

Belongs to the herpesviridae ICP22 family.

This Saimiriine herpesvirus 2 (strain 11) (SaHV-2) protein is Transcriptional regulator ICP22 homolog (73).